We begin with the raw amino-acid sequence, 270 residues long: uncharacterized protein (270 aa).

Residues 43-112 (CTANDIKRKY…REEYDRFGIH (70 aa)) form the J domain. The tract at residues 239 to 270 (EQSKQIPTQQKPSSLPPPERALPAPTMPTPSS) is disordered. A compositionally biased stretch (polar residues) spans 242-251 (KQIPTQQKPS). A compositionally biased stretch (pro residues) spans 252-270 (SLPPPERALPAPTMPTPSS).

This is an uncharacterized protein from Schizosaccharomyces pombe (strain 972 / ATCC 24843) (Fission yeast).